The chain runs to 382 residues: GDSL esterase/lipase At4g01130 (382 aa).

The N-terminal stretch at 1-28 is a signal peptide; that stretch reads MASDINRRRSFSLLVLIIVMLYGHKGDS. The Nucleophile role is filled by Ser41. Asn118, Asn263, Asn275, and Asn330 each carry an N-linked (GlcNAc...) asparagine glycan. Catalysis depends on residues Asp348 and His351.

This sequence belongs to the 'GDSL' lipolytic enzyme family.

The protein resides in the secreted. This is GDSL esterase/lipase At4g01130 from Arabidopsis thaliana (Mouse-ear cress).